The following is a 341-amino-acid chain: Flagellar P-ring protein (341 aa).

A signal peptide spans 1–19 (MKQVFLWLIFVLAFHKLLA).

Belongs to the FlgI family. In terms of assembly, the basal body constitutes a major portion of the flagellar organelle and consists of four rings (L,P,S, and M) mounted on a central rod.

Its subcellular location is the periplasm. The protein localises to the bacterial flagellum basal body. Functionally, assembles around the rod to form the L-ring and probably protects the motor/basal body from shearing forces during rotation. This is Flagellar P-ring protein from Helicobacter acinonychis (strain Sheeba).